The primary structure comprises 173 residues: MKANTMFIILCLSLSTLCVSSQSTSVHGKIFVPNRAVKLSSDGNYPFDLSKEDGAQPYFMTPRLRFYPIGKRAAGEMEQSEGQNPETKSHSWRKRSVLTPSLSSLGESLESGISKRISINQDLKAITDMLLTEQIQARRRCLDALRQRLLDLGKRDSDVSLFNGDLLPNGRCS.

An N-terminal signal peptide occupies residues 1–21 (MKANTMFIILCLSLSTLCVSS). Positions 22 to 34 (QSTSVHGKIFVPN) are excised as a propeptide. An Isoleucine amide modification is found at I69. Residues 73 to 114 (AAGEMEQSEGQNPETKSHSWRKRSVLTPSLSSLGESLESGIS) constitute a propeptide that is removed on maturation. Residues 75-94 (GEMEQSEGQNPETKSHSWRK) are disordered. C141 and C172 are oxidised to a cystine. L152 carries the post-translational modification Leucine amide.

This sequence belongs to the molluscan ELH family. As to quaternary structure, califin A consists of a 36-residue large subunit bound by a single disulfide bond to a 18-residue small subunit.

It localises to the secreted. Its function is as follows. The atrial gland peptide A and peptide B precursors are the source of the 2 peptides that, upon release from this reproductive system gland, initiate the egg-laying process by exciting the bag cell neurons. These neurons, clustered in neural connectives near the abdominal ganglion, in turn release other peptides that act directly on the ganglion and also, via the circulating hemolymph, on many other organs to control the physiological processes of egg-laying. One of these other peptides is the egg-laying hormone. Functionally, injected in sexually mature animals califin A excites LB and LC cells of the abdominal ganglion and causes egg-laying. The protein is Atrial gland and califin peptides of Aplysia californica (California sea hare).